Reading from the N-terminus, the 268-residue chain is Protein MGF 300-1L (268 aa).

The Cytoplasmic segment spans residues 1–175 (MVSLTTCCLK…QTFKTFYAKN (175 aa)). A helical transmembrane segment spans residues 176–193 (YSLSTLYCIFLAIYYKLY). At 194–268 (TALRKMVKIY…MYAFSQNDYW (75 aa)) the chain is on the extracellular side.

This sequence belongs to the asfivirus MGF 300 family.

It is found in the host membrane. In terms of biological role, plays a role in virus cell tropism, and may be required for efficient virus replication in macrophages. The polypeptide is Protein MGF 300-1L (Ornithodoros (relapsing fever ticks)).